A 461-amino-acid chain; its full sequence is L-serine dehydratase (461 aa).

Belongs to the iron-sulfur dependent L-serine dehydratase family. It depends on [4Fe-4S] cluster as a cofactor.

The catalysed reaction is L-serine = pyruvate + NH4(+). It functions in the pathway carbohydrate biosynthesis; gluconeogenesis. This is L-serine dehydratase (sdaA) from Mycobacterium bovis (strain ATCC BAA-935 / AF2122/97).